We begin with the raw amino-acid sequence, 493 residues long: Glycerol kinase (493 aa).

Thr11 is a binding site for ADP. ATP is bound by residues Thr11, Thr12, and Ser13. Thr11 is a binding site for sn-glycerol 3-phosphate. Residue Arg15 coordinates ADP. Sn-glycerol 3-phosphate is bound by residues Arg80, Glu81, Tyr132, and Asp241. 5 residues coordinate glycerol: Arg80, Glu81, Tyr132, Asp241, and Gln242. Thr263 and Gly306 together coordinate ADP. ATP-binding residues include Thr263, Gly306, Gln310, and Gly408. Residue Gly408 participates in ADP binding.

Belongs to the FGGY kinase family.

The enzyme catalyses glycerol + ATP = sn-glycerol 3-phosphate + ADP + H(+). It participates in polyol metabolism; glycerol degradation via glycerol kinase pathway; sn-glycerol 3-phosphate from glycerol: step 1/1. With respect to regulation, inhibited by fructose 1,6-bisphosphate (FBP). Key enzyme in the regulation of glycerol uptake and metabolism. Catalyzes the phosphorylation of glycerol to yield sn-glycerol 3-phosphate. This is Glycerol kinase from Cereibacter sphaeroides (strain ATCC 17029 / ATH 2.4.9) (Rhodobacter sphaeroides).